The primary structure comprises 107 residues: L-rhamnose mutarotase (107 aa).

Substrate is bound at residue Tyr18. Catalysis depends on His22, which acts as the Proton donor. Residues Tyr41 and 76–77 each bind substrate; that span reads WW.

The protein belongs to the rhamnose mutarotase family. As to quaternary structure, homodimer.

It localises to the cytoplasm. It carries out the reaction alpha-L-rhamnose = beta-L-rhamnose. It functions in the pathway carbohydrate metabolism; L-rhamnose metabolism. In terms of biological role, involved in the anomeric conversion of L-rhamnose. This is L-rhamnose mutarotase from Paraburkholderia phytofirmans (strain DSM 17436 / LMG 22146 / PsJN) (Burkholderia phytofirmans).